A 377-amino-acid chain; its full sequence is Queuine tRNA-ribosyltransferase (377 aa).

Asp-94 serves as the catalytic Proton acceptor. Residues 94–98 (DSGGF), Asp-148, Gln-191, and Gly-218 each bind substrate. Residues 249-255 (GVGTPDD) form an RNA binding region. Residue Asp-268 is the Nucleophile of the active site. The segment at 273 to 277 (TRAGR) is RNA binding; important for wobble base 34 recognition.

This sequence belongs to the queuine tRNA-ribosyltransferase family. As to quaternary structure, homodimer. Within each dimer, one monomer is responsible for RNA recognition and catalysis, while the other monomer binds to the replacement base PreQ1.

It catalyses the reaction 7-aminomethyl-7-carbaguanine + guanosine(34) in tRNA = 7-aminomethyl-7-carbaguanosine(34) in tRNA + guanine. Its pathway is tRNA modification; tRNA-queuosine biosynthesis. In terms of biological role, catalyzes the base-exchange of a guanine (G) residue with the queuine precursor 7-aminomethyl-7-deazaguanine (PreQ1) at position 34 (anticodon wobble position) in tRNAs with GU(N) anticodons (tRNA-Asp, -Asn, -His and -Tyr). Catalysis occurs through a double-displacement mechanism. The nucleophile active site attacks the C1' of nucleotide 34 to detach the guanine base from the RNA, forming a covalent enzyme-RNA intermediate. The proton acceptor active site deprotonates the incoming PreQ1, allowing a nucleophilic attack on the C1' of the ribose to form the product. After dissociation, two additional enzymatic reactions on the tRNA convert PreQ1 to queuine (Q), resulting in the hypermodified nucleoside queuosine (7-(((4,5-cis-dihydroxy-2-cyclopenten-1-yl)amino)methyl)-7-deazaguanosine). The polypeptide is Queuine tRNA-ribosyltransferase (Brucella melitensis biotype 1 (strain ATCC 23456 / CCUG 17765 / NCTC 10094 / 16M)).